The following is a 129-amino-acid chain: Glycine cleavage system H protein (129 aa).

The Lipoyl-binding domain maps to 24–106 (SYTVGITEHA…YGEGWFFRVM (83 aa)). K65 is subject to N6-lipoyllysine.

Belongs to the GcvH family. In terms of assembly, the glycine cleavage system is composed of four proteins: P, T, L and H. (R)-lipoate is required as a cofactor.

Functionally, the glycine cleavage system catalyzes the degradation of glycine. The H protein shuttles the methylamine group of glycine from the P protein to the T protein. In Shewanella sp. (strain MR-7), this protein is Glycine cleavage system H protein.